A 546-amino-acid polypeptide reads, in one-letter code: Low-affinity methionine permease (546 aa).

Residues 1 to 70 (MEPLLFNSGK…QGRHLGVFST (70 aa)) lie on the Extracellular side of the membrane. A helical membrane pass occupies residues 71–91 (VVLFVSRIMGSGIFAVPSVIL). The Cytoplasmic segment spans residues 92–98 (LNTGGNK). The chain crosses the membrane as a helical span at residues 99-119 (LIYFAIWVFSAAIAFAGLYLF). Residues 120–148 (LEFGSWIPKSGGRKNFLERSFERPRLLIS) are Extracellular-facing. Residues 149-169 (VVFSCYSVLTGYALTGSIVFG) form a helical membrane-spanning segment. The Cytoplasmic portion of the chain corresponds to 170–188 (KYVLSAFGVTDDSWSKYVS). The chain crosses the membrane as a helical span at residues 189–209 (ISFIIFAVLIHGVSVRHGVFI). Residues 210-213 (QNAL) lie on the Extracellular side of the membrane. Residues 214–234 (GGLKLIMIVLMCFAGLYTLFF) traverse the membrane as a helical segment. At 235 to 254 (YKSTGQVAWDLPVTQVEKDS) the chain is on the cytoplasmic side. The helical transmembrane segment at 255–275 (LLSVSSIATAFISSFFCFSGW) threads the bilayer. The Extracellular portion of the chain corresponds to 276–297 (DTVHTVTSEIKNPVKTLKVSGP). Residues 298–318 (LSLIICFVCYTMMNVAYLKVL) form a helical membrane-spanning segment. Threonine 319 is a topological domain (cytoplasmic). Residues 320 to 340 (YEEIVSAGPLVGSVLFTKLFG) form a helical membrane-spanning segment. Over 341 to 346 (PRVGGK) the chain is Extracellular. The helical transmembrane segment at 347-367 (FIAFSIAISAASNILVVIYSI) threads the bilayer. Residues 368–393 (SRVNQEIFKEGYLPFSIHMSKNWPFD) are Cytoplasmic-facing. A helical transmembrane segment spans residues 394-414 (APLPSISLCGFITIAWILILP). Residues 415–423 (KEGESFNYL) lie on the Extracellular side of the membrane. Residues 424–444 (VSMDGYGNQFFLLLVAIGLFI) form a helical membrane-spanning segment. Residues 445–459 (WRFKHKNEVPEIRAS) are Cytoplasmic-facing. A helical transmembrane segment spans residues 460–480 (TFGVLAIITLSLYMLMAPFFA). The Extracellular segment spans residues 481-494 (DPSLNRVGFLPPYQ). Residues 495–515 (IMSLLVIVACFFFWLVKFVLL) form a helical membrane-spanning segment. Over 516–546 (PKFFHYKLLPKITYLHDGLIVTEWVKKPCLC) the chain is Cytoplasmic.

This sequence to yeast high affinity methionine permease (MUP1).

The protein resides in the membrane. In terms of biological role, very low affinity permease for methionine. This is Low-affinity methionine permease (MUP3) from Saccharomyces cerevisiae (strain ATCC 204508 / S288c) (Baker's yeast).